We begin with the raw amino-acid sequence, 416 residues long: MMNVPSAAAASSCDDFGYNATPPPPPSLLPIMDQDGGGGSIQRDHHQHHNHQQLGYNLEPSSLALLPPSNAAAAAAHHATIAHASPHDLLQFYPTSHYLAAAGGAGGGGNPYSHFTAAAAAGSTFQSYYQQPPQDAPEYYFPTLVSSAEENMASFAATQLGLNLGYRTYFPPRGGYTYGHHPPRCQAEGCKADLSSAKRYHRRHKVCEHHSKAPVVVTAGGLHQRFCQQCSRFHLLDEFDDAKKSCRKRLADHNRRRRKSKPSDGEHSGEKRRAQANKSAATKDKAGSSSKNAGIGDGFETQLLGGAHMSKDQDQAMDLGEVVKEAVDPKGKASMQQQQQQAHHGIHQQSHQQHGFPFPSSSGSCLFPQSQGAVSSTDTSNIAQVQEPSLAFHQQHHQHSNILQLGQAMFDLDFDH.

The interval 11–51 (SSCDDFGYNATPPPPPSLLPIMDQDGGGGSIQRDHHQHHNH) is disordered. The SBP-type zinc-finger motif lies at 182–260 (PPRCQAEGCK…ADHNRRRRKS (79 aa)). Cysteine 185, cysteine 190, cysteine 207, histidine 210, cysteine 227, cysteine 230, histidine 234, and cysteine 246 together coordinate Zn(2+). The Bipartite nuclear localization signal signature appears at 243–259 (KKSCRKRLADHNRRRRK). The segment at 250-299 (LADHNRRRRKSKPSDGEHSGEKRRAQANKSAATKDKAGSSSKNAGIGDGF) is disordered. The segment covering 261–273 (KPSDGEHSGEKRR) has biased composition (basic and acidic residues).

In terms of tissue distribution, expressed in stems, leaf sheaths, and young panicles. Weakly expressed in ligules, auricles, and leaf sheaths at the basal region.

Its subcellular location is the nucleus. In terms of biological role, probable transcription factor that plays an important role in building the laminar joint between leaf blade and leaf sheath boundary, thereby controlling ligule and auricle development. This Oryza sativa subsp. japonica (Rice) protein is Squamosa promoter-binding-like protein 8 (SPL8).